The primary structure comprises 271 residues: Dehydrodolichyl diphosphate synthase 7 (271 aa).

Residues 24 to 41 (FLFRVLCVGPIPTNISFI) form a helical membrane-spanning segment.

This sequence belongs to the UPP synthase family. Mg(2+) is required as a cofactor.

The protein resides in the endoplasmic reticulum membrane. It functions in the pathway protein modification; protein glycosylation. In terms of biological role, catalyzes cis-prenyl chain elongation to produce the polyprenyl backbone of dolichol, a glycosyl carrier-lipid required for the biosynthesis of several classes of glycoprotein. The sequence is that of Dehydrodolichyl diphosphate synthase 7 from Arabidopsis thaliana (Mouse-ear cress).